The primary structure comprises 213 residues: Large ribosomal subunit protein uL1 (213 aa).

The protein belongs to the universal ribosomal protein uL1 family. As to quaternary structure, part of the 50S ribosomal subunit.

Its function is as follows. Binds directly to 23S rRNA. Probably involved in E site tRNA release. Protein L1 is also a translational repressor protein, it controls the translation of its operon by binding to its mRNA. The sequence is that of Large ribosomal subunit protein uL1 from Methanoculleus marisnigri (strain ATCC 35101 / DSM 1498 / JR1).